The sequence spans 178 residues: Nucleoside triphosphate/diphosphate phosphatase (178 aa).

The Proton donor role is filled by R23. Mg(2+) is bound by residues N87, D103, D105, D107, D120, and E123.

It belongs to the Ntdp family. It depends on Mg(2+) as a cofactor.

It carries out the reaction a ribonucleoside 5'-triphosphate + H2O = a ribonucleoside 5'-diphosphate + phosphate + H(+). The enzyme catalyses a ribonucleoside 5'-diphosphate + H2O = a ribonucleoside 5'-phosphate + phosphate + H(+). In terms of biological role, has nucleoside phosphatase activity towards nucleoside triphosphates and nucleoside diphosphates. In Latilactobacillus sakei subsp. sakei (strain 23K) (Lactobacillus sakei subsp. sakei), this protein is Nucleoside triphosphate/diphosphate phosphatase.